A 433-amino-acid chain; its full sequence is D-amino acid dehydrogenase (433 aa).

3 to 17 (IVVLGAGVLGVTSAW) contacts FAD.

This sequence belongs to the DadA oxidoreductase family. FAD is required as a cofactor.

It catalyses the reaction a D-alpha-amino acid + A + H2O = a 2-oxocarboxylate + AH2 + NH4(+). It functions in the pathway amino-acid degradation; D-alanine degradation; NH(3) and pyruvate from D-alanine: step 1/1. Oxidative deamination of D-amino acids. The protein is D-amino acid dehydrogenase of Paracoccus denitrificans (strain Pd 1222).